We begin with the raw amino-acid sequence, 150 residues long: Avidin-related protein 3 (150 aa).

Residues 1–24 form the signal peptide; that stretch reads MVHTTSPLLLLLLLSLALVAPSLS. Residues 26-147 form the Avidin-like domain; it reads RKCSLTGKWT…GYNNFTRQRT (122 aa). Cys-28 and Cys-105 are disulfide-bonded. Residues Asn-36, Ser-40, Tyr-57, Thr-59, and Asp-63 each contribute to the biotin site. An N-linked (GlcNAc...) asparagine glycan is attached at Asn-93. The biotin site is built by Ser-95, Ser-99, and Asn-140. Asn-141 is a glycosylation site (N-linked (GlcNAc...) asparagine).

It belongs to the avidin/streptavidin family. Homotetramer. In terms of processing, glycosylated.

The protein localises to the secreted. Functionally, forms a strong non-covalent specific complex with biotin. In Gallus gallus (Chicken), this protein is Avidin-related protein 3 (AVR3).